Reading from the N-terminus, the 70-residue chain is ATP synthase subunit c (70 aa).

2 helical membrane-spanning segments follow: residues 4-24 and 47-67; these read IASAIAIGLAALGAGIGNGLI and FVGVALVEALPIIAVVIAFMV.

The protein belongs to the ATPase C chain family. In terms of assembly, F-type ATPases have 2 components, F(1) - the catalytic core - and F(0) - the membrane proton channel. F(1) has five subunits: alpha(3), beta(3), gamma(1), delta(1), epsilon(1). F(0) has three main subunits: a(1), b(2) and c(10-14). The alpha and beta chains form an alternating ring which encloses part of the gamma chain. F(1) is attached to F(0) by a central stalk formed by the gamma and epsilon chains, while a peripheral stalk is formed by the delta and b chains.

The protein resides in the cell membrane. F(1)F(0) ATP synthase produces ATP from ADP in the presence of a proton or sodium gradient. F-type ATPases consist of two structural domains, F(1) containing the extramembraneous catalytic core and F(0) containing the membrane proton channel, linked together by a central stalk and a peripheral stalk. During catalysis, ATP synthesis in the catalytic domain of F(1) is coupled via a rotary mechanism of the central stalk subunits to proton translocation. In terms of biological role, key component of the F(0) channel; it plays a direct role in translocation across the membrane. A homomeric c-ring of between 10-14 subunits forms the central stalk rotor element with the F(1) delta and epsilon subunits. This chain is ATP synthase subunit c, found in Priestia megaterium (strain ATCC 12872 / QMB1551) (Bacillus megaterium).